The primary structure comprises 403 residues: 1-deoxy-D-xylulose 5-phosphate reductoisomerase (403 aa).

Residues T18, G19, S20, I21, Q46, and N132 each coordinate NADPH. 1-deoxy-D-xylulose 5-phosphate is bound at residue K133. Position 134 (E134) interacts with NADPH. D158 is a binding site for Mn(2+). The 1-deoxy-D-xylulose 5-phosphate site is built by S159, E160, S189, and H212. E160 is a binding site for Mn(2+). Residue G218 coordinates NADPH. S225, N230, K231, and E234 together coordinate 1-deoxy-D-xylulose 5-phosphate. Residue E234 coordinates Mn(2+).

It belongs to the DXR family. Requires Mg(2+) as cofactor. The cofactor is Mn(2+).

The enzyme catalyses 2-C-methyl-D-erythritol 4-phosphate + NADP(+) = 1-deoxy-D-xylulose 5-phosphate + NADPH + H(+). It participates in isoprenoid biosynthesis; isopentenyl diphosphate biosynthesis via DXP pathway; isopentenyl diphosphate from 1-deoxy-D-xylulose 5-phosphate: step 1/6. Functionally, catalyzes the NADPH-dependent rearrangement and reduction of 1-deoxy-D-xylulose-5-phosphate (DXP) to 2-C-methyl-D-erythritol 4-phosphate (MEP). This Aromatoleum aromaticum (strain DSM 19018 / LMG 30748 / EbN1) (Azoarcus sp. (strain EbN1)) protein is 1-deoxy-D-xylulose 5-phosphate reductoisomerase.